Reading from the N-terminus, the 178-residue chain is 6,7-dimethyl-8-ribityllumazine synthase (178 aa).

Residues tyrosine 27, 58-60 (SLE), and 82-84 (CVI) each bind 5-amino-6-(D-ribitylamino)uracil. 87-88 (AT) contacts (2S)-2-hydroxy-3-oxobutyl phosphate. The Proton donor role is filled by histidine 90. Residue asparagine 114 participates in 5-amino-6-(D-ribitylamino)uracil binding. Arginine 128 contributes to the (2S)-2-hydroxy-3-oxobutyl phosphate binding site.

The protein belongs to the DMRL synthase family.

The enzyme catalyses (2S)-2-hydroxy-3-oxobutyl phosphate + 5-amino-6-(D-ribitylamino)uracil = 6,7-dimethyl-8-(1-D-ribityl)lumazine + phosphate + 2 H2O + H(+). It functions in the pathway cofactor biosynthesis; riboflavin biosynthesis; riboflavin from 2-hydroxy-3-oxobutyl phosphate and 5-amino-6-(D-ribitylamino)uracil: step 1/2. Functionally, catalyzes the formation of 6,7-dimethyl-8-ribityllumazine by condensation of 5-amino-6-(D-ribitylamino)uracil with 3,4-dihydroxy-2-butanone 4-phosphate. This is the penultimate step in the biosynthesis of riboflavin. The polypeptide is 6,7-dimethyl-8-ribityllumazine synthase (Jannaschia sp. (strain CCS1)).